We begin with the raw amino-acid sequence, 130 residues long: Small ribosomal subunit protein uS11c (130 aa).

The protein belongs to the universal ribosomal protein uS11 family. In terms of assembly, part of the 30S ribosomal subunit.

The protein localises to the plastid. It localises to the chloroplast. The protein is Small ribosomal subunit protein uS11c of Spirogyra maxima (Green alga).